The sequence spans 264 residues: Virulence plasmid protein pGP3-D (264 aa).

This is Virulence plasmid protein pGP3-D from Chlamydia psittaci (Chlamydophila psittaci).